A 155-amino-acid polypeptide reads, in one-letter code: Transcriptional repressor NrdR (155 aa).

Residues 3–34 (CPFCGHSSTQVLDSRVSEDGDTVRRRRRCEAC) fold into a zinc finger. In terms of domain architecture, ATP-cone spans 49 to 139 (PAIVKKNGSR…VYRSFEDVSE (91 aa)).

The protein belongs to the NrdR family. It depends on Zn(2+) as a cofactor.

Negatively regulates transcription of bacterial ribonucleotide reductase nrd genes and operons by binding to NrdR-boxes. The protein is Transcriptional repressor NrdR of Cupriavidus metallidurans (strain ATCC 43123 / DSM 2839 / NBRC 102507 / CH34) (Ralstonia metallidurans).